The chain runs to 657 residues: MSSSNDHVLVPMSQRNKNGLPGMSSRGARTLAEGDVLSFHHITYRVKVKSGFLVRKTAEKEILSDINGIMKPGLNAILGPTGGGKSSLLDVLAARKDPRGLSGDVLINGAPQPANFKCSSGYVVQDDVVMGTLTVRENLQFSAALRLPKAMKTHEKNERINTIIKELGLDKVADSKVGTQFTRGISGGERKRTSIGMELITDPSILFLDEPTTGLDSSTANAVLLLLKRMSKQGRTIIFSIHQPRYSIFKLFDSLTLLASGKLMFHGPAQKALEYFASAGYHCEPYNNPADFFLDVINGDSSAVMLNRGEQDHEANKTEEPSKREKPIIENLAEFYINSTIYGETKAELDQLPVAQKKKGSSAFREPVYVTSFCHQLRWIARRSFKNLLGNPQASVAQLIVTVILGLIIGALYFGLKNDPTGMQNRAGVFFFLTTNQCFTSVSAVELFVVEKKLFIHEYISGYYRVSSYFFGKLVSDLLPMRFLPSVIYTCILYFMLGLKRTVEAFFIMMFTLIMVAYTASSMALAIAAGQSVVSVATLLMTISFVFMMLFSGLLVNLRTIGPWLSWLQYFSIPRYGFTALQHNEFLGQEFCPGLNVTMNSTCVNSYTICTGNDYLINQGIDLSPWGLWRNHVALACMIIIFLTIAYLKLLFLKKYS.

The segment at 1–25 (MSSSNDHVLVPMSQRNKNGLPGMSS) is disordered. Residues 1 to 395 (MSSSNDHVLV…KNLLGNPQAS (395 aa)) lie on the Cytoplasmic side of the membrane. The ABC transporter domain maps to 48–285 (VKSGFLVRKT…FASAGYHCEP (238 aa)). ATP is bound by residues 79–86 (GPTGGGKS), 183–189 (RGISGGE), Glu210, and His242. The 265-residue stretch at 389 to 653 (LGNPQASVAQ…TIAYLKLLFL (265 aa)) folds into the ABC transmembrane type-2 domain. Residues 396–416 (VAQLIVTVILGLIIGALYFGL) form a helical membrane-spanning segment. Over 417–428 (KNDPTGMQNRAG) the chain is Extracellular. The helical transmembrane segment at 429 to 449 (VFFFLTTNQCFTSVSAVELFV) threads the bilayer. At 450–477 (VEKKLFIHEYISGYYRVSSYFFGKLVSD) the chain is on the cytoplasmic side. Residues 478–498 (LLPMRFLPSVIYTCILYFMLG) traverse the membrane as a helical segment. Residues 499–506 (LKRTVEAF) are Extracellular-facing. Residues 507–527 (FIMMFTLIMVAYTASSMALAI) form a helical membrane-spanning segment. The Cytoplasmic segment spans residues 528–535 (AAGQSVVS). A helical membrane pass occupies residues 536–556 (VATLLMTISFVFMMLFSGLLV). The Extracellular portion of the chain corresponds to 557–632 (NLRTIGPWLS…LSPWGLWRNH (76 aa)). Cys592 and Cys610 are disulfide-bonded. Asn596 and Asn600 each carry an N-linked (GlcNAc...) asparagine glycan. The helical transmembrane segment at 633–653 (VALACMIIIFLTIAYLKLLFL) threads the bilayer. The Cytoplasmic segment spans residues 654–657 (KKYS).

Belongs to the ABC transporter superfamily. ABCG family. Eye pigment precursor importer (TC 3.A.1.204) subfamily. As to quaternary structure, homodimer; disulfide-linked. The minimal functional unit is a homodimer, but the major oligomeric form in plasma membrane is a homotetramer with possibility of higher order oligomerization up to homododecamers. N-glycosylated in brain capillary, kidney and small intestine but not in heart. In terms of processing, N-glycosylated. Glycosylation-deficient ABCG2 is normally expressed and functional. Post-translationally, phosphorylated. Phosphorylation may regulate the localization to the plasma membrane, the homooligomerization and therefore, the activity of the transporter. In terms of tissue distribution, highly expressed in brain capillary, kidney and small intestine. Lower expression in heart. Preferentially expressed (at protein level) on the luminal membrane of brain capillaries, in kidney and small intestine.

The protein localises to the cell membrane. Its subcellular location is the apical cell membrane. It localises to the mitochondrion membrane. It carries out the reaction ATP + H2O + xenobioticSide 1 = ADP + phosphate + xenobioticSide 2.. The enzyme catalyses urate(in) + ATP + H2O = urate(out) + ADP + phosphate + H(+). The catalysed reaction is indoxyl sulfate(in) + ATP + H2O = indoxyl sulfate(out) + ADP + phosphate + H(+). It catalyses the reaction sphing-4-enine 1-phosphate(in) + ATP + H2O = sphing-4-enine 1-phosphate(out) + ADP + phosphate + H(+). It carries out the reaction estrone 3-sulfate(in) + ATP + H2O = estrone 3-sulfate(out) + ADP + phosphate + H(+). The enzyme catalyses dehydroepiandrosterone 3-sulfate(in) + ATP + H2O = dehydroepiandrosterone 3-sulfate(out) + ADP + phosphate + H(+). The catalysed reaction is 4-methylumbelliferone sulfate(in) + ATP + H2O = 4-methylumbelliferone sulfate(out) + ADP + phosphate + H(+). It catalyses the reaction 5,7-dimethyl-2-methylamino-4-(3-pyridylmethyl)-1,3-benzothiazol-6-yl beta-D-glucuronate(in) + ATP + H2O = 5,7-dimethyl-2-methylamino-4-(3-pyridylmethyl)-1,3-benzothiazol-6-yl beta-D-glucuronate(out) + ADP + phosphate + H(+). It carries out the reaction 4-methylumbelliferone beta-D-glucuronate(in) + ATP + H2O = 4-methylumbelliferone beta-D-glucuronate(out) + ADP + phosphate + H(+). The enzyme catalyses 5,7-dimethyl-2-methylamino-4-(3-pyridylmethyl)-1,3-benzothiazol-6-yl sulfate(in) + ATP + H2O = 5,7-dimethyl-2-methylamino-4-(3-pyridylmethyl)-1,3-benzothiazol-6-yl sulfate(out) + ADP + phosphate + H(+). The catalysed reaction is 17beta-estradiol 17-O-(beta-D-glucuronate)(in) + ATP + H2O = 17beta-estradiol 17-O-(beta-D-glucuronate)(out) + ADP + phosphate + H(+). It catalyses the reaction methotrexate(in) + ATP + H2O = methotrexate(out) + ADP + phosphate + H(+). It carries out the reaction riboflavin(in) + ATP + H2O = riboflavin(out) + ADP + phosphate + H(+). The enzyme catalyses pheophorbide a(in) + ATP + H2O = pheophorbide a(out) + ADP + phosphate + H(+). The catalysed reaction is itaconate(in) + ATP + H2O = itaconate(out) + ADP + phosphate + H(+). Broad substrate specificity ATP-dependent transporter of the ATP-binding cassette (ABC) family that actively extrudes a wide variety of physiological compounds, dietary toxins and xenobiotics from cells. Involved in porphyrin homeostasis, mediating the export of protoporphyrin IX (PPIX) from both mitochondria to cytosol and cytosol to extracellular space, it also functions in the cellular export of heme. Also mediates the efflux of sphingosine-1-P from cells. Acts as a urate exporter functioning in both renal and extrarenal urate excretion. In kidney, it also functions as a physiological exporter of the uremic toxin indoxyl sulfate. Also involved in the excretion of steroids like estrone 3-sulfate/E1S, 3beta-sulfooxy-androst-5-en-17-one/DHEAS, and other sulfate conjugates. Mediates the secretion of the riboflavin and biotin vitamins into milk. Extrudes pheophorbide a, a phototoxic porphyrin catabolite of chlorophyll, reducing its bioavailability. Plays an important role in the exclusion of xenobiotics from the brain. It confers to cells a resistance to multiple drugs and other xenobiotics including mitoxantrone, pheophorbide, camptothecin, methotrexate, azidothymidine, and the anthracyclines daunorubicin and doxorubicin, through the control of their efflux. In placenta, it limits the penetration of drugs from the maternal plasma into the fetus. May play a role in early stem cell self-renewal by blocking differentiation. In inflammatory macrophages, exports itaconate from the cytosol to the extracellular compartment and limits the activation of TFEB-dependent lysosome biogenesis involved in antibacterial innate immune response. In Rattus norvegicus (Rat), this protein is Broad substrate specificity ATP-binding cassette transporter ABCG2 (Abcg2).